A 392-amino-acid polypeptide reads, in one-letter code: tRNA (guanine(6)-N2)-methyltransferase (392 aa).

A THUMP domain is found at 73–183; that stretch reads SAIPLLNHFS…DSELFVGVDT (111 aa). S-adenosyl-L-methionine-binding positions include 199–203, 230–232, E275, 303–304, and N317; these read HPAHL, SGT, and DA.

Belongs to the methyltransferase superfamily.

The protein resides in the cytoplasm. The catalysed reaction is guanosine(6) in tRNA + S-adenosyl-L-methionine = N(2)-methylguanosine(6) in tRNA + S-adenosyl-L-homocysteine + H(+). Its function is as follows. S-adenosyl-L-methionine-dependent methyltransferase that catalyzes the methylation of the guanosine nucleotide at position 6 (m2G6) in tRNA. The chain is tRNA (guanine(6)-N2)-methyltransferase from Archaeoglobus fulgidus (strain ATCC 49558 / DSM 4304 / JCM 9628 / NBRC 100126 / VC-16).